Reading from the N-terminus, the 501-residue chain is Zinc finger C3HC-type protein 1 (501 aa).

Position 2 is an N-acetylalanine (Ala2). Residues 21 to 73 (VVRSPEGTPQKVRELIDEGIVPEEGGTEPKDTAATFQSVDGSPQAEQSPLEST) are disordered. Residue Ser24 is modified to Phosphoserine. Thr28 is subject to Phosphothreonine. Positions 54–72 (ATFQSVDGSPQAEQSPLES) are enriched in polar residues. Ser58, Ser62, and Ser68 each carry phosphoserine. Thr84 carries the phosphothreonine modification. The segment at 102–156 (CAKYGWVTVECDMLKCSSCQAFLCASLQPTFDFGRYKERCAELKKSLCSAHEKFC) adopts a C3HC-type zinc-finger fold. The segment at 302 to 421 (SPIPGVEGRP…TSPRSFFDPT (120 aa)) is disordered. Phosphoserine occurs at positions 320 and 328. Residues 326 to 338 (TRSQDATVSPGSE) show a composition bias toward polar residues. Thr332 carries the post-translational modification Phosphothreonine. Phosphoserine occurs at positions 334, 337, 343, 353, 358, 369, and 380. Composition is skewed to polar residues over residues 350–359 (RTRSWESSSP) and 369–383 (SPTT…SMGT). A Phosphothreonine modification is found at Thr383. Position 394 is a phosphoserine (Ser394). Positions 395-401 (PLRRTKR) match the Nuclear localization signal motif. 2 positions are modified to phosphoserine: Ser406 and Ser482. Positions 406–420 (SSSSSDTSPRSFFDP) are enriched in low complexity.

Interacts with TPR; this interaction mediates ZC3HC1 nuclear envelopes (NE)-association but also required for proper positioning of a substantial amount of TPR at the nuclear basket (NB). Post-translationally, phosphorylated. May also be weakly phosphorylated on Tyr residues.

It localises to the nucleus. The protein localises to the nucleus envelope. Its function is as follows. Required for proper positioning of a substantial amount of TPR at the nuclear basket (NB) through interaction with TPR. The chain is Zinc finger C3HC-type protein 1 (Zc3hc1) from Mus musculus (Mouse).